Reading from the N-terminus, the 244-residue chain is tRNA (guanine-N(1)-)-methyltransferase (244 aa).

Residues glycine 120 and 140 to 145 contribute to the S-adenosyl-L-methionine site; that span reads IGDYIL.

It belongs to the RNA methyltransferase TrmD family. Homodimer.

Its subcellular location is the cytoplasm. The catalysed reaction is guanosine(37) in tRNA + S-adenosyl-L-methionine = N(1)-methylguanosine(37) in tRNA + S-adenosyl-L-homocysteine + H(+). In terms of biological role, specifically methylates guanosine-37 in various tRNAs. In Brucella canis (strain ATCC 23365 / NCTC 10854 / RM-666), this protein is tRNA (guanine-N(1)-)-methyltransferase.